The sequence spans 95 residues: Small ribosomal subunit protein bS6 (95 aa).

Belongs to the bacterial ribosomal protein bS6 family.

Binds together with bS18 to 16S ribosomal RNA. In Bacillus cytotoxicus (strain DSM 22905 / CIP 110041 / 391-98 / NVH 391-98), this protein is Small ribosomal subunit protein bS6.